The chain runs to 222 residues: MALSVETESHIYRALRTASGAAAHLVALGFTIFVAVLARPGSSLFSWHPVLMSLAFSFLMTEALLMFSPESSLLRSLSRKVRARCHWVLQLLALLCALLGLGLVILHKEQLGKAHLTTRHGQAGLLAVLWAGLQCSGGMGLLYPKLLPRWPLAKLKLYHATSGLVGYLLGSASLLLGMFSLWFTATVTGGAWYLAVLCPILTSLVIMNQVSNAYLYRKRIQP.

At 2 to 17 (ALSVETESHIYRALRT) the chain is on the cytoplasmic side. The region spanning 14 to 217 (ALRTASGAAA…NQVSNAYLYR (204 aa)) is the Cytochrome b561 domain. The chain crosses the membrane as a helical span at residues 18 to 38 (ASGAAAHLVALGFTIFVAVLA). Topologically, residues 39–46 (RPGSSLFS) are lumenal. Residues 47-67 (WHPVLMSLAFSFLMTEALLMF) form a helical membrane-spanning segment. Histidine 48 contacts heme b. Over 68–85 (SPESSLLRSLSRKVRARC) the chain is Cytoplasmic. Positions 86 and 120 each coordinate heme b. The chain crosses the membrane as a helical span at residues 86–106 (HWVLQLLALLCALLGLGLVIL). Residues 107-122 (HKEQLGKAHLTTRHGQ) are Lumenal-facing. Residues 123-143 (AGLLAVLWAGLQCSGGMGLLY) form a helical membrane-spanning segment. Residues 144-162 (PKLLPRWPLAKLKLYHATS) are Cytoplasmic-facing. Heme b is bound at residue histidine 159. Residues 163-183 (GLVGYLLGSASLLLGMFSLWF) traverse the membrane as a helical segment. Over 184-186 (TAT) the chain is Lumenal. A helical transmembrane segment spans residues 187 to 207 (VTGGAWYLAVLCPILTSLVIM). The Cytoplasmic portion of the chain corresponds to 208–222 (NQVSNAYLYRKRIQP).

Requires heme b as cofactor. In terms of tissue distribution, highly expressed in the brain, lung, liver, and kidney. Moderately expressed in the heart, placenta, skeletal muscle, and pancreas.

Its subcellular location is the endoplasmic reticulum membrane. It is found in the cytoplasmic vesicle membrane. The enzyme catalyses monodehydro-L-ascorbate radical(out) + L-ascorbate(in) = monodehydro-L-ascorbate radical(in) + L-ascorbate(out). It catalyses the reaction Fe(3+)(out) + L-ascorbate(in) = monodehydro-L-ascorbate radical(in) + Fe(2+)(out) + H(+). Transmembrane reductase that may use ascorbate as an electron donor in the cytoplasm and transfer electrons across endoplasmic reticulum membranes to reduce monodehydro-L-ascorbate radical and iron cations Fe(3+) in the lumen of that compartment. The polypeptide is Transmembrane reductase CYB561D2 (Mus musculus (Mouse)).